The chain runs to 434 residues: MSGLLIAAPASGSGKTTVTLGLMRALKRRGVAIAPGKAGPDYIDPAFHAAATGEPCFNYDPWAMRPELLLANASHVASGGRTLIVEAMMGLHDGAADGSGTPADLAATLNLAVILVVDCARMSQSVAALVRGYADHRDDIRVVGVILNKVGSDRHEMMLRDALGKVRMPVFGVLRQDSALQLPERHLGLVQAGEHSALEGFIEAAAARVEAACDLDAIRLIATIFPQVPAAADAERLRPLGQRIAVARDIAFAFCYEHLLYGWRQGGAEISFFSPLADEGPDAAADAVYLPGGYPELHAGQLSAAARFRSGMHSAAERGARIFGECGGYMVLGEGLVAADGTRYDMLGLLPLVTSFAERRRHLGYRRVVPVDNAFFDGPMTAHEFHYATIVAEGAADRLFAVSDAAGEDLGQAGLRRGPVAGSFMHLIDVAGAA.

In terms of domain architecture, GATase cobBQ-type spans 243–434; that stretch reads RIAVARDIAF…MHLIDVAGAA (192 aa). The active-site Nucleophile is the C326.

Belongs to the CobB/CbiA family. As to quaternary structure, homodimer. It depends on Mg(2+) as a cofactor.

The enzyme catalyses hydrogenobyrinate + 2 L-glutamine + 2 ATP + 2 H2O = hydrogenobyrinate a,c-diamide + 2 L-glutamate + 2 ADP + 2 phosphate + 2 H(+). It participates in cofactor biosynthesis; adenosylcobalamin biosynthesis; cob(II)yrinate a,c-diamide from precorrin-2 (aerobic route): step 9/10. Functionally, catalyzes the ATP-dependent amidation of the two carboxylate groups at positions a and c of hydrogenobyrinate, using either L-glutamine or ammonia as the nitrogen source. To a much lesser extent, can also use cobyrinate as substrate in vitro, but the physiological substrate is indeed hydrogenobyrinate, as part of the aerobic pathway for cobalamin biosynthesis. This Sinorhizobium sp protein is Hydrogenobyrinate a,c-diamide synthase.